The following is a 284-amino-acid chain: Phosphatidylglycerol--prolipoprotein diacylglyceryl transferase (284 aa).

Helical transmembrane passes span I21–A41, Y62–Y82, F106–Y126, L136–I156, P190–A210, G218–Y238, and L252–Y272. R155 contributes to the a 1,2-diacyl-sn-glycero-3-phospho-(1'-sn-glycerol) binding site.

It belongs to the Lgt family.

It is found in the cell inner membrane. The catalysed reaction is L-cysteinyl-[prolipoprotein] + a 1,2-diacyl-sn-glycero-3-phospho-(1'-sn-glycerol) = an S-1,2-diacyl-sn-glyceryl-L-cysteinyl-[prolipoprotein] + sn-glycerol 1-phosphate + H(+). It functions in the pathway protein modification; lipoprotein biosynthesis (diacylglyceryl transfer). Its function is as follows. Catalyzes the transfer of the diacylglyceryl group from phosphatidylglycerol to the sulfhydryl group of the N-terminal cysteine of a prolipoprotein, the first step in the formation of mature lipoproteins. The polypeptide is Phosphatidylglycerol--prolipoprotein diacylglyceryl transferase (Helicobacter pylori (strain P12)).